We begin with the raw amino-acid sequence, 222 residues long: MKKMNIAIDGPAGAGKSTVAKQVAQALSFLYIDTGAMYRALTYAAIEHHVSPDDEASLKSLLDSIEIKLVDEQSKTRVYVNNTDVTDQVRTEEVTKTVSLVSSHGQVRKEMVRQQRLLAEGTNCVLDGRDIGTYVLPNAELKFFLTATVEERARRRYEENIQKGFKQSLEQLIKDIASRDEFDSNRSFAPLRKAEDAIEIDTTSLSISEVTQTIIGYVKERV.

10-18 (GPAGAGKST) provides a ligand contact to ATP.

The protein belongs to the cytidylate kinase family. Type 1 subfamily.

It localises to the cytoplasm. It carries out the reaction CMP + ATP = CDP + ADP. The catalysed reaction is dCMP + ATP = dCDP + ADP. This Halalkalibacterium halodurans (strain ATCC BAA-125 / DSM 18197 / FERM 7344 / JCM 9153 / C-125) (Bacillus halodurans) protein is Cytidylate kinase.